The primary structure comprises 200 residues: Putative HTH-type transcriptional regulator YhjB (200 aa).

Residues 135–200 enclose the HTH luxR-type domain; it reads DIKDLKSLSA…QAAMMLNISS (66 aa). The H-T-H motif DNA-binding region spans 159 to 178; the sequence is NKEIGRALNISTGTVKAHLE.

This Escherichia coli (strain K12) protein is Putative HTH-type transcriptional regulator YhjB (yhjB).